Here is a 484-residue protein sequence, read N- to C-terminus: Regulator of G-protein signaling 9 (484 aa).

The region spanning 30–105 is the DEP domain; the sequence is PDTGVKTQSQ…PDSSLYRFQT (76 aa). Positions 219–280 constitute a G protein gamma domain; the sequence is ITAVKKEIMY…ITDDTQFWDL (62 aa). The region spanning 299 to 414 is the RGS domain; the sequence is NFSELIRDPK…LKSPIYKEML (116 aa).

In terms of assembly, heterodimer with Gbeta5. Interacts with RGS7BP, leading to regulate the subcellular location of the heterodimer formed with Gbeta5. Component of the RGS9-1-Gbeta5 complex composed of RGS9 (RGS9-1), Gbeta5 (GNB5) and RGS9BP. Post-translationally, phosphorylation is decreased by light exposition.

The protein localises to the membrane. Functionally, inhibits signal transduction by increasing the GTPase activity of G protein alpha subunits thereby driving them into their inactive GDP-bound form. Binds to G(t)-alpha. Involved in phototransduction; key element in the recovery phase of visual transduction. The chain is Regulator of G-protein signaling 9 from Tamias striatus (Eastern chipmunk).